We begin with the raw amino-acid sequence, 688 residues long: Bifunctional protein GAL10 (688 aa).

Residues 1–346 form a galactowaldenase region; the sequence is MSEDKYCLVT…TQDNPFGYQI (346 aa). 6-37 contacts NAD(+); the sequence is YCLVTGGAGYIGSHTVVELCEAGYKCIVVDNL. Residues 347-688 are mutarotase; the sequence is KGVDSKFFGD…HKLSYTFRTL (342 aa). The active-site For mutarotase activity is His525.

The protein in the N-terminal section; belongs to the NAD(P)-dependent epimerase/dehydratase family. In the C-terminal section; belongs to the aldose epimerase family. The cofactor is NAD(+).

The catalysed reaction is UDP-alpha-D-glucose = UDP-alpha-D-galactose. The enzyme catalyses alpha-D-glucose = beta-D-glucose. The protein operates within carbohydrate metabolism; galactose metabolism. It participates in carbohydrate metabolism; hexose metabolism. Mutarotase converts alpha-aldose to the beta-anomer. It is active on D-glucose, L-arabinose, D-xylose, D-galactose, maltose and lactose. This is Bifunctional protein GAL10 (GAL10) from Kluyveromyces lactis (strain ATCC 8585 / CBS 2359 / DSM 70799 / NBRC 1267 / NRRL Y-1140 / WM37) (Yeast).